The following is a 113-amino-acid chain: Probable UPF0122 protein (113 aa).

This sequence belongs to the UPF0122 family.

Its function is as follows. Might take part in the signal recognition particle (SRP) pathway. This is inferred from the conservation of its genetic proximity to ftsY/ffh. May be a regulatory protein. The sequence is that of Probable UPF0122 protein from Mycoplasma mycoides.